Reading from the N-terminus, the 207-residue chain is Outer-membrane lipoprotein carrier protein (207 aa).

An N-terminal signal peptide occupies residues 1–21; it reads MRLFRVLLLSAVAFALSPAQA.

The protein belongs to the LolA family. Monomer.

It is found in the periplasm. Its function is as follows. Participates in the translocation of lipoproteins from the inner membrane to the outer membrane. Only forms a complex with a lipoprotein if the residue after the N-terminal Cys is not an aspartate (The Asp acts as a targeting signal to indicate that the lipoprotein should stay in the inner membrane). This is Outer-membrane lipoprotein carrier protein from Azotobacter vinelandii (strain DJ / ATCC BAA-1303).